We begin with the raw amino-acid sequence, 129 residues long: Small ribosomal subunit protein uS11 (129 aa).

The protein belongs to the universal ribosomal protein uS11 family. Part of the 30S ribosomal subunit. Interacts with proteins S7 and S18. Binds to IF-3.

Functionally, located on the platform of the 30S subunit, it bridges several disparate RNA helices of the 16S rRNA. Forms part of the Shine-Dalgarno cleft in the 70S ribosome. The polypeptide is Small ribosomal subunit protein uS11 (Allorhizobium ampelinum (strain ATCC BAA-846 / DSM 112012 / S4) (Agrobacterium vitis (strain S4))).